We begin with the raw amino-acid sequence, 326 residues long: Polycomb complex protein BMI-1-A (326 aa).

An RING-type zinc finger spans residues 18-57; sequence CVLCGGYFIDATTIIECLHSFCKTCIVRYLETSKYCPICD. The short motif at 81 to 95 is the Nuclear localization signal element; the sequence is KLVPGLFKGEMKRRR. Disordered regions lie at residues 239-262 and 274-326; these read NPHT…DKAG and CIPS…ISSG. Residues 290 to 303 are compositionally biased toward low complexity; the sequence is ISSTINGTSSSSSS.

In terms of assembly, component of a PRC1-like complex. Interacts with cbx4.

It localises to the nucleus. Component of a Polycomb group (PcG) multiprotein PRC1-like complex, a complex class required to maintain the transcriptionally repressive state of many genes, including Hox genes, throughout development. PcG PRC1 complex acts via chromatin remodeling and modification of histones; it mediates monoubiquitination of histone H2A 'Lys-119', rendering chromatin heritably changed in its expressibility. In the PRC1 complex, it is required to stimulate the E3 ubiquitin-protein ligase activity of rnf2. The chain is Polycomb complex protein BMI-1-A (bmi1a) from Xenopus laevis (African clawed frog).